We begin with the raw amino-acid sequence, 228 residues long: Ran-binding protein 1 homolog a (228 aa).

Positions 1–13 are enriched in basic and acidic residues; the sequence is MATNEPEHEHRDE. 2 disordered regions span residues 1–30 and 159–228; these read MATN…QVAP and SEEE…GPST. The segment covering 14-24 has biased composition (acidic residues); the sequence is EEAGANEDEDT. A RanBD1 domain is found at 27–162; that stretch reads QVAPIVRLEE…FKEVAESEEE (136 aa). Residues 179–228 are compositionally biased toward basic and acidic residues; that stretch reads LTVEETKTEEKTEAKAVETAKTEVKAEEKKESEAEKSGEAKKTEESGPST.

Interacts with the GTP-bound form of RAN1, RAN2 and RAN3. Ubiquitous. Preferentially expressed in root tips and gynoecium.

The protein localises to the nucleus. It localises to the nuclear pore complex. This is Ran-binding protein 1 homolog a (RANBP1A) from Arabidopsis thaliana (Mouse-ear cress).